Reading from the N-terminus, the 369-residue chain is MRAEIENYIKKIEQSLDLIWRSLDIEALTVRLTELEELTADPNLWNNNANAQTLLREKNNLEEKLNVFNKLKSNLKEILELEAMAEVENDLETLNQIEQDFKKLSIITAKFETECLFSGETDCNNCFLEINAGAGGTESHDWASIMMRMYLRFAERLGFKTKIINMINGEEVGIKSCTIRIIGKRAYGWFKTESGVHRLVRISPFNAAGKRMTSFASSWIYPEIDDDIAITIEDKDLRIDTFRSSGAGGQHVNTTDSAVRITHIPTNTVTQCQSDRSQHKNKAQAMKMLQAKLYKLEMQKRNENVDKQNANKTDNSWGHQIRSYVLQPYQIVKDLRTNYETSDTKGVLDGNLEDFVSASLSMNNSGNKT.

Glutamine 250 carries the post-translational modification N5-methylglutamine.

The protein belongs to the prokaryotic/mitochondrial release factor family. Post-translationally, methylated by PrmC. Methylation increases the termination efficiency of RF2.

It is found in the cytoplasm. Functionally, peptide chain release factor 2 directs the termination of translation in response to the peptide chain termination codons UGA and UAA. The protein is Peptide chain release factor 2 (prfB) of Rickettsia prowazekii (strain Madrid E).